The primary structure comprises 283 residues: Large ribosomal subunit protein mL46 (283 aa).

Residue Lys217 is modified to N6-succinyllysine. Lys228 carries the post-translational modification N6-acetyllysine. Lys246 carries the post-translational modification N6-succinyllysine.

It belongs to the mitochondrion-specific ribosomal protein mL46 family. Component of the mitochondrial ribosome large subunit (39S) which comprises a 16S rRNA and about 50 distinct proteins.

The protein resides in the mitochondrion. In Mus musculus (Mouse), this protein is Large ribosomal subunit protein mL46 (Mrpl46).